The following is a 350-amino-acid chain: Glyceraldehyde-3-phosphate dehydrogenase (350 aa).

NAD(+) is bound by residues 10–11 (RI), Asp-36, Arg-82, and Ser-125. Residues 161–163 (SCT), Thr-193, 222–223 (TG), and Arg-245 contribute to the D-glyceraldehyde 3-phosphate site. Cys-162 (nucleophile) is an active-site residue. Asn-331 is a binding site for NAD(+).

It belongs to the glyceraldehyde-3-phosphate dehydrogenase family. In terms of assembly, homotetramer.

The protein localises to the cytoplasm. The enzyme catalyses D-glyceraldehyde 3-phosphate + phosphate + NAD(+) = (2R)-3-phospho-glyceroyl phosphate + NADH + H(+). It participates in carbohydrate degradation; glycolysis; pyruvate from D-glyceraldehyde 3-phosphate: step 1/5. Its function is as follows. Catalyzes the oxidative phosphorylation of glyceraldehyde 3-phosphate (G3P) to 1,3-bisphosphoglycerate (BPG) using the cofactor NAD. The first reaction step involves the formation of a hemiacetal intermediate between G3P and a cysteine residue, and this hemiacetal intermediate is then oxidized to a thioester, with concomitant reduction of NAD to NADH. The reduced NADH is then exchanged with the second NAD, and the thioester is attacked by a nucleophilic inorganic phosphate to produce BPG. This Treponema pallidum (strain Nichols) protein is Glyceraldehyde-3-phosphate dehydrogenase (gap).